Reading from the N-terminus, the 154-residue chain is Large ribosomal subunit protein uL30 (154 aa).

Residues proline 114 to glycine 139 form a disordered region. Over residues glycine 123–lysine 133 the composition is skewed to basic and acidic residues.

Belongs to the universal ribosomal protein uL30 family. Part of the 50S ribosomal subunit.

The chain is Large ribosomal subunit protein uL30 from Natronomonas pharaonis (strain ATCC 35678 / DSM 2160 / CIP 103997 / JCM 8858 / NBRC 14720 / NCIMB 2260 / Gabara) (Halobacterium pharaonis).